The sequence spans 589 residues: uncharacterized protein (589 aa).

Disordered regions lie at residues 328-365 (LSST…EDGP), 379-459 (SLLG…DPSN), 525-555 (RSTS…GAVK), and 569-589 (VRGT…SRDM). A compositionally biased stretch (polar residues) spans 398-425 (VSLSSASTSARPTQRRSSLTPCSQTPQE). Over residues 426–445 (THQHAREALTTRMESQREAN) the composition is skewed to basic and acidic residues. The span at 536–545 (QGDDDDEEDG) shows a compositional bias: acidic residues.

This is an uncharacterized protein from Mycosarcoma maydis (Corn smut fungus).